A 392-amino-acid polypeptide reads, in one-letter code: Tryptophan synthase beta chain (392 aa).

K84 carries the post-translational modification N6-(pyridoxal phosphate)lysine.

It belongs to the TrpB family. In terms of assembly, tetramer of two alpha and two beta chains. The cofactor is pyridoxal 5'-phosphate.

It carries out the reaction (1S,2R)-1-C-(indol-3-yl)glycerol 3-phosphate + L-serine = D-glyceraldehyde 3-phosphate + L-tryptophan + H2O. The protein operates within amino-acid biosynthesis; L-tryptophan biosynthesis; L-tryptophan from chorismate: step 5/5. Its function is as follows. The beta subunit is responsible for the synthesis of L-tryptophan from indole and L-serine. The sequence is that of Tryptophan synthase beta chain from Campylobacter jejuni subsp. doylei (strain ATCC BAA-1458 / RM4099 / 269.97).